The sequence spans 206 residues: Ras-related protein ralB-B (206 aa).

21–28 (GSGGVGKS) is a binding site for GTP. Residues 43-51 (YEPTKADSY) carry the Effector region motif. GTP-binding positions include 68–72 (DTAGQ) and 128–131 (NKSD). Residues 180 to 189 (KMSENKDKNG) are compositionally biased toward basic and acidic residues. The disordered stretch occupies residues 180–206 (KMSENKDKNGKKSGKSKKGFKQRCCLL). A compositionally biased stretch (basic residues) spans 190–200 (KKSGKSKKGFK). Cys-203 carries the post-translational modification Cysteine methyl ester. Residue Cys-203 is the site of S-geranylgeranyl cysteine attachment. The propeptide at 204-206 (CLL) is removed in mature form.

Belongs to the small GTPase superfamily. Ras family. In terms of assembly, interacts with ralbp1 and rap1gds1.

The protein resides in the cell membrane. Its subcellular location is the midbody. The enzyme catalyses GTP + H2O = GDP + phosphate + H(+). Functionally, multifunctional GTPase involved in a variety of cellular processes including gene expression, cell migration, cell proliferation, oncogenic transformation and membrane trafficking. Accomplishes its multiple functions by interacting with distinct downstream effectors. Acts as a GTP sensor for GTP-dependent exocytosis of dense core vesicles. Required both to stabilize the assembly of the exocyst complex and to localize functional exocyst complexes to the leading edge of migrating cells. Required for suppression of apoptosis. In late stages of cytokinesis, upon completion of the bridge formation between dividing cells, mediates exocyst recruitment to the midbody to drive abscission. Regulates the actin cytoskeleton to play a role in gastrulation or neurulation. During the cleavage stages, the GTP-bound form induces a cortical reaction that affects the localization of pigment granules. Activated by the FGF pathway via ras and ral-GDS, but independently of raf. Directs ralbp1 to the plasma membrane. Involved in ligand-dependent receptor mediated endocytosis of the EGF and insulin receptors. The protein is Ras-related protein ralB-B (ralb-b) of Xenopus laevis (African clawed frog).